Reading from the N-terminus, the 144-residue chain is Small ribosomal subunit protein bS16 (144 aa).

The interval 115 to 144 (NEPVAEAVTPKKKAKKDDAAAESTEAEAAE) is disordered.

The protein belongs to the bacterial ribosomal protein bS16 family.

The sequence is that of Small ribosomal subunit protein bS16 from Nocardia farcinica (strain IFM 10152).